The primary structure comprises 716 residues: Fatty acid oxidation complex subunit alpha (716 aa).

The segment at 1-188 (MIYQSPTIQV…KVGAIDAVVA (188 aa)) is enoyl-CoA hydratase/isomerase. D295 is a binding site for substrate. Positions 310-716 (KDIKHAAVLG…SNNGSYYPKA (407 aa)) are 3-hydroxyacyl-CoA dehydrogenase. Residues M323, D342, 399 to 401 (VVE), K406, and S428 each bind NAD(+). Catalysis depends on H449, which acts as the For 3-hydroxyacyl-CoA dehydrogenase activity. NAD(+) is bound at residue N452. 2 residues coordinate substrate: N499 and Y659.

In the N-terminal section; belongs to the enoyl-CoA hydratase/isomerase family. It in the C-terminal section; belongs to the 3-hydroxyacyl-CoA dehydrogenase family. In terms of assembly, heterotetramer of two alpha chains (FadB) and two beta chains (FadA).

The enzyme catalyses a (3S)-3-hydroxyacyl-CoA + NAD(+) = a 3-oxoacyl-CoA + NADH + H(+). The catalysed reaction is a (3S)-3-hydroxyacyl-CoA = a (2E)-enoyl-CoA + H2O. It catalyses the reaction a 4-saturated-(3S)-3-hydroxyacyl-CoA = a (3E)-enoyl-CoA + H2O. It carries out the reaction (3S)-3-hydroxybutanoyl-CoA = (3R)-3-hydroxybutanoyl-CoA. The enzyme catalyses a (3Z)-enoyl-CoA = a 4-saturated (2E)-enoyl-CoA. The catalysed reaction is a (3E)-enoyl-CoA = a 4-saturated (2E)-enoyl-CoA. It participates in lipid metabolism; fatty acid beta-oxidation. Functionally, involved in the aerobic and anaerobic degradation of long-chain fatty acids via beta-oxidation cycle. Catalyzes the formation of 3-oxoacyl-CoA from enoyl-CoA via L-3-hydroxyacyl-CoA. It can also use D-3-hydroxyacyl-CoA and cis-3-enoyl-CoA as substrate. The polypeptide is Fatty acid oxidation complex subunit alpha (Shewanella amazonensis (strain ATCC BAA-1098 / SB2B)).